Consider the following 366-residue polypeptide: NADH-quinone oxidoreductase subunit D (366 aa).

This sequence belongs to the complex I 49 kDa subunit family. In terms of assembly, NDH-1 is composed of 14 different subunits. Subunits NuoB, C, D, E, F, and G constitute the peripheral sector of the complex.

It is found in the cell membrane. The catalysed reaction is a quinone + NADH + 5 H(+)(in) = a quinol + NAD(+) + 4 H(+)(out). NDH-1 shuttles electrons from NADH, via FMN and iron-sulfur (Fe-S) centers, to quinones in the respiratory chain. The immediate electron acceptor for the enzyme in this species is believed to be a menaquinone. Couples the redox reaction to proton translocation (for every two electrons transferred, four hydrogen ions are translocated across the cytoplasmic membrane), and thus conserves the redox energy in a proton gradient. The polypeptide is NADH-quinone oxidoreductase subunit D (Bacillus cereus (strain ATCC 14579 / DSM 31 / CCUG 7414 / JCM 2152 / NBRC 15305 / NCIMB 9373 / NCTC 2599 / NRRL B-3711)).